Consider the following 111-residue polypeptide: Large ribosomal subunit protein uL24 (111 aa).

The protein belongs to the universal ribosomal protein uL24 family. In terms of assembly, part of the 50S ribosomal subunit.

One of two assembly initiator proteins, it binds directly to the 5'-end of the 23S rRNA, where it nucleates assembly of the 50S subunit. Its function is as follows. One of the proteins that surrounds the polypeptide exit tunnel on the outside of the subunit. This chain is Large ribosomal subunit protein uL24, found in Streptococcus pneumoniae (strain Hungary19A-6).